The sequence spans 207 residues: Ras-related protein Rab-8A (207 aa).

GTP is bound by residues Ser17, Gly18, Val19, Gly20, Lys21, Thr22, Cys23, Ser35, Ser39, and Thr40. Residue Thr22 coordinates Mg(2+). 2 short sequence motifs (switch) span residues 31–45 (DAFN…GIDF) and 63–80 (DTAG…YYRG). Mg(2+) is bound by residues Thr40 and Asp63. Gly66 is a GTP binding site. Thr72 carries the post-translational modification Phosphothreonine. Residues Asn121, Lys122, Asp124, Ala152, and Lys153 each coordinate GTP. Ser181 and Ser185 each carry phosphoserine. Cys204 is modified (cysteine methyl ester). The S-geranylgeranyl cysteine moiety is linked to residue Cys204. The propeptide at 205-207 (VLL) is removed in mature form.

Belongs to the small GTPase superfamily. Rab family. In terms of assembly, interacts (GTP-bound form) with MICALL1; regulates RAB8A association with recycling endosomes. Interacts with MICALL2; competes with RAB13 and is involved in E-cadherin endocytic recycling. Interacts (GTP-bound form) with MICAL1, MICALCL, MICAL3, EHBP1 and EHBP1L1; at least in case of MICAL1, MICALCL, MICAL3 and EHBP1L1 two molecules of RAB8A can bind to one molecule of the effector protein; ternary complexes of RAB8A, RAB13 and either MICAL1 or EHBP1L1 are possible. Interacts with EHD1. Interacts with MAP4K2 and SYTL4. Interacts with SGSM1 and SGSM3. Interacts with RABIF, RIMS2, RPH3A and RPH3A. Interacts with OPTN. Interacts with RAB3IP, RAB3IP functions as guanine exchange factor (GEF). Interacts with MYO5B. Interacts with CIMAP3. Interacts with BIRC6/bruce. Interacts with OCRL. Interacts with AHI1. Interacts with DCDC1. Interacts with LRRK2; interaction facilitates phosphorylation of Thr-72. Interacts with RAB31P, GDI1, GDI2, CHM, CHML, RABGGTA, RABGGTB, TBC1D15 and INPP5B; these interactions are dependent on Thr-72 not being phosphorylated. Interacts with RILPL1 and RILPL2; these interactions are dependent on the phosphorylation of Thr-72 by LRRK2. Interacts with DZIP1; prevents inhibition by the GDP-dissociation inhibitor GDI2. Interacts (in GDP-bound form) with RAB3IP/Rabin8, RAB3IP functions as guanine exchange factor (GEF) towards RAB8A. Interacts (in GDP-bound form) with RPGR, RPGR functions as GEF towards RAB8A. It depends on Mg(2+) as a cofactor. In terms of processing, phosphorylation of Thr-72 in the switch II region by LRRK2 prevents the association of RAB regulatory proteins, including CHM, CHML and RAB GDP dissociation inhibitors GDI1 and GDI2. Phosphorylation by LRRK2 is required for localization to stressed lysosomes.

The protein resides in the cell membrane. The protein localises to the golgi apparatus. It is found in the endosome membrane. It localises to the recycling endosome membrane. Its subcellular location is the cell projection. The protein resides in the cilium. The protein localises to the cytoplasmic vesicle. It is found in the phagosome membrane. It localises to the cytoplasm. Its subcellular location is the cytoskeleton. The protein resides in the microtubule organizing center. The protein localises to the centrosome. It is found in the centriole. It localises to the cilium basal body. Its subcellular location is the midbody. The protein resides in the lysosome. The enzyme catalyses GTP + H2O = GDP + phosphate + H(+). Regulated by guanine nucleotide exchange factors (GEFs) such as RAB3IP/Rabin8 and RPGR which promote the exchange of bound GDP for free GTP, GTPase activating proteins (GAPs) which increase the GTP hydrolysis activity, and GDP dissociation inhibitors (GDIs) which inhibit the dissociation of the nucleotide from the GTPase. Activated in response to insulin. Functionally, the small GTPases Rab are key regulators of intracellular membrane trafficking, from the formation of transport vesicles to their fusion with membranes. Rabs cycle between an inactive GDP-bound form and an active GTP-bound form that is able to recruit to membranes different sets of downstream effectors directly responsible for vesicle formation, movement, tethering and fusion. RAB8A is involved in polarized vesicular trafficking and neurotransmitter release. Together with RAB11A, RAB3IP, the exocyst complex, PARD3, PRKCI, ANXA2, CDC42 and DNMBP promotes transcytosis of PODXL to the apical membrane initiation sites (AMIS), apical surface formation and lumenogenesis. Regulates the compacted morphology of the Golgi. Together with MYO5B and RAB11A participates in epithelial cell polarization. Also involved in membrane trafficking to the cilium and ciliogenesis. Together with MICALL2, may also regulate adherens junction assembly. May play a role in insulin-induced transport to the plasma membrane of the glucose transporter GLUT4 and therefore play a role in glucose homeostasis. Involved in autophagy. Participates in the export of a subset of neosynthesized proteins through a Rab8-Rab10-Rab11-dependent endososomal export route. Targeted to and stabilized on stressed lysosomes through LRRK2 phosphorylation. Suppresses stress-induced lysosomal enlargement through EHBP1 and EHNP1L1 effector proteins. The protein is Ras-related protein Rab-8A (RAB8A) of Bos taurus (Bovine).